The following is a 408-amino-acid chain: Imidazolonepropionase (408 aa).

Fe(3+)-binding residues include His-73 and His-75. Zn(2+) is bound by residues His-73 and His-75. 4-imidazolone-5-propanoate is bound by residues Arg-82, Tyr-145, and His-178. Tyr-145 contributes to the N-formimidoyl-L-glutamate binding site. His-243 contacts Fe(3+). His-243 serves as a coordination point for Zn(2+). Residue Gln-246 participates in 4-imidazolone-5-propanoate binding. Asp-318 provides a ligand contact to Fe(3+). Asp-318 is a Zn(2+) binding site. N-formimidoyl-L-glutamate contacts are provided by Asn-320 and Gly-322. Ser-323 contributes to the 4-imidazolone-5-propanoate binding site.

This sequence belongs to the metallo-dependent hydrolases superfamily. HutI family. Zn(2+) is required as a cofactor. It depends on Fe(3+) as a cofactor.

Its subcellular location is the cytoplasm. The enzyme catalyses 4-imidazolone-5-propanoate + H2O = N-formimidoyl-L-glutamate. The protein operates within amino-acid degradation; L-histidine degradation into L-glutamate; N-formimidoyl-L-glutamate from L-histidine: step 3/3. In terms of biological role, catalyzes the hydrolytic cleavage of the carbon-nitrogen bond in imidazolone-5-propanoate to yield N-formimidoyl-L-glutamate. It is the third step in the universal histidine degradation pathway. This Shewanella sp. (strain W3-18-1) protein is Imidazolonepropionase.